A 489-amino-acid chain; its full sequence is Glutamyl-tRNA(Gln) amidotransferase subunit A (489 aa).

Catalysis depends on charge relay system residues K77 and S157. The Acyl-ester intermediate role is filled by S181.

This sequence belongs to the amidase family. GatA subfamily. As to quaternary structure, heterotrimer of A, B and C subunits.

It carries out the reaction L-glutamyl-tRNA(Gln) + L-glutamine + ATP + H2O = L-glutaminyl-tRNA(Gln) + L-glutamate + ADP + phosphate + H(+). Allows the formation of correctly charged Gln-tRNA(Gln) through the transamidation of misacylated Glu-tRNA(Gln) in organisms which lack glutaminyl-tRNA synthetase. The reaction takes place in the presence of glutamine and ATP through an activated gamma-phospho-Glu-tRNA(Gln). The polypeptide is Glutamyl-tRNA(Gln) amidotransferase subunit A (Caulobacter vibrioides (strain ATCC 19089 / CIP 103742 / CB 15) (Caulobacter crescentus)).